A 1070-amino-acid polypeptide reads, in one-letter code: DNA-directed RNA polymerase subunit beta (1070 aa).

The protein belongs to the RNA polymerase beta chain family. As to quaternary structure, in plastids the minimal PEP RNA polymerase catalytic core is composed of four subunits: alpha, beta, beta', and beta''. When a (nuclear-encoded) sigma factor is associated with the core the holoenzyme is formed, which can initiate transcription.

It is found in the plastid. The enzyme catalyses RNA(n) + a ribonucleoside 5'-triphosphate = RNA(n+1) + diphosphate. In terms of biological role, DNA-dependent RNA polymerase catalyzes the transcription of DNA into RNA using the four ribonucleoside triphosphates as substrates. The polypeptide is DNA-directed RNA polymerase subunit beta (rpoB) (Cuscuta reflexa (Southern Asian dodder)).